The chain runs to 267 residues: Chorismate mutase (267 aa).

Residues 7–262 (LSDASKALDL…EVEYLMQRLK (256 aa)) enclose the Chorismate mutase domain. L-tyrosine-binding residues include R77, R78, N145, G147, S148, and T151. L-tryptophan-binding residues include N145, G147, and S148.

In terms of assembly, homodimer.

The protein localises to the cytoplasm. It catalyses the reaction chorismate = prephenate. It functions in the pathway metabolic intermediate biosynthesis; prephenate biosynthesis; prephenate from chorismate: step 1/1. Its activity is regulated as follows. Each dimer has two allosteric binding sites that can bind the regulatory effectors tryptophan or tyrosine. Can bind either one tryptophan or one tyrosine, two tryptophan or two tyrosine or one tryptophan and one tyrosine, which differentially affect the catalytic activity. Activated by tryptophan and subject to feedback inhibition by tyrosine. In the presence of both tryptophan and tyrosine, the enzyme is in the activated state. In terms of biological role, catalyzes the Claisen rearrangement of chorismate to prephenate. Acts at the first branch point in the aromatic amino acid pathway where it steers biosynthesis towards phenylalanine and tyrosine, and away from tryptophan. The polypeptide is Chorismate mutase (Emericella nidulans (strain FGSC A4 / ATCC 38163 / CBS 112.46 / NRRL 194 / M139) (Aspergillus nidulans)).